Consider the following 97-residue polypeptide: Mapk-regulated corepressor-interacting protein 1 (97 aa).

The tract at residues 1 to 29 (MTSSPVSRVVYNGKRNSSPRSPTNSSEIF) is disordered. Positions 15–26 (RNSSPRSPTNSS) are enriched in low complexity. Position 21 is a phosphoserine (serine 21). Residue threonine 30 is modified to Phosphothreonine. Tyrosine 41 bears the Phosphotyrosine mark. Residue lysine 79 is modified to N6-acetyllysine. The PXDLS motif motif lies at 80–84 (PIDLS).

Belongs to the MCRIP family. In terms of assembly, interacts (unphosphorylated form, via the PXDLS motif) with CTBP1, competitively inhibiting CTBP-ZEB1 interaction. Interacts with CTBP2. Interacts with MCRIP2. Interacts with DDX6. In terms of processing, phosphorylation by MAPK3/1 (ERK1/2) regulates MCRIP1 binding to CTBP(s). As to expression, widely expressed (at protein level).

It localises to the nucleus. It is found in the cytoplasm. Its subcellular location is the stress granule. Functionally, the phosphorylation status of MCRIP1 functions as a molecular switch to regulate epithelial-mesenchymal transition. Unphosphorylated MCRIP1 binds to and inhibits the transcriptional corepressor CTBP(s). When phosphorylated by MAPK/ERK, MCRIP1 releases CTBP(s) resulting in transcriptional silencing of the E-cadherin gene and induction of epithelial-mesenchymal transition. In Mus musculus (Mouse), this protein is Mapk-regulated corepressor-interacting protein 1 (Mcrip1).